Here is a 150-residue protein sequence, read N- to C-terminus: Large ribosomal subunit protein bL9 (150 aa).

Belongs to the bacterial ribosomal protein bL9 family.

Binds to the 23S rRNA. This chain is Large ribosomal subunit protein bL9, found in Vibrio campbellii (strain ATCC BAA-1116).